A 227-amino-acid polypeptide reads, in one-letter code: E3 ubiquitin-protein ligase ZNRF1 (227 aa).

Residues 1–42 (MGGKQSTAARSRGPFPGVSTDDSAVPPPGGAPHFGHYRTGGG) are disordered. G2 carries N-myristoyl glycine lipidation. A required for endosomal and lysosomal localization and myristoylation region spans residues 2 to 10 (GGKQSTAAR). A phosphoserine mark is found at S50, S52, and S53. Residues 68-105 (PFGLYTPASRGTGDSERAPGGGGSASDSTYAHGNGYQE) form a disordered region. Y103 carries the phosphotyrosine; by SRC modification. Position 123 is a phosphoserine (S123). The RING-type; atypical zinc-finger motif lies at 184–225 (CVICLEELLQGDTIARLPCLCIYHKSCIDSWFEVNRSCPEHP).

As to quaternary structure, interacts with AKT1, GLUL and TUBB2A. Interacts with ZNRF2. Interacts (via its RING domain) with UBE2N. Interacts (when phosphorylated) with YWHAE. Post-translationally, N-myristoylation targets ZNRF1 to intracellular membranes. Phosphorylated by SRC at Tyr-103; leading to 'Lys-63'-linked ubiquitination of TLR3, lysosomal trafficking and degradation. Expressed primarily in the nervous system, with expression higher in developing brain relative to adult. Expressed at low levels in testis and thymus.

It localises to the endosome. The protein localises to the lysosome. Its subcellular location is the membrane. It is found in the cytoplasmic vesicle. The protein resides in the secretory vesicle. It localises to the synaptic vesicle membrane. The catalysed reaction is S-ubiquitinyl-[E2 ubiquitin-conjugating enzyme]-L-cysteine + [acceptor protein]-L-lysine = [E2 ubiquitin-conjugating enzyme]-L-cysteine + N(6)-ubiquitinyl-[acceptor protein]-L-lysine.. The protein operates within protein modification; protein ubiquitination. Functionally, E3 ubiquitin-protein ligase that plays a role in different processes including cell differentiation, receptor recycling or regulation of inflammation. Mediates the ubiquitination of AKT1 and GLUL, thereby playing a role in neuron cells differentiation. Plays a role in the establishment and maintenance of neuronal transmission and plasticity. Regulates Schwann cells differentiation by mediating ubiquitination of GLUL. Promotes neurodegeneration by mediating 'Lys-48'-linked polyubiquitination and subsequent degradation of AKT1 in axons: degradation of AKT1 prevents AKT1-mediated phosphorylation of GSK3B, leading to GSK3B activation and phosphorylation of DPYSL2/CRMP2 followed by destabilization of microtubule assembly in axons. Ubiquitinates the Na(+)/K(+) ATPase alpha-1 subunit/ATP1A1 and thereby influences its endocytosis and/or degradation. Controls ligand-induced EGFR signaling via mediating receptor ubiquitination and recruitment of the ESCRT machinery. Acts as a negative feedback mechanism controlling TLR3 trafficking by mediating TLR3 'Lys-63'-linked polyubiquitination to reduce type I IFN production. Modulates inflammation by promoting caveolin-1/CAV1 ubiquitination and degradation to regulate TLR4-activated immune response. This chain is E3 ubiquitin-protein ligase ZNRF1 (ZNRF1), found in Homo sapiens (Human).